Consider the following 377-residue polypeptide: Homocitrate synthase 1 (377 aa).

Positions valine 4–leucine 255 constitute a Pyruvate carboxyltransferase domain.

It belongs to the alpha-IPM synthase/homocitrate synthase family.

It catalyses the reaction acetyl-CoA + 2-oxoglutarate + H2O = (2R)-homocitrate + CoA + H(+). Its function is as follows. This protein is a Fe-Mo-cofactor biosynthetic component. The sequence is that of Homocitrate synthase 1 (nifV1) from Nostoc sp. (strain PCC 7120 / SAG 25.82 / UTEX 2576).